A 511-amino-acid chain; its full sequence is Sodium/proline symporter (511 aa).

The next 13 membrane-spanning stretches (helical) occupy residues 16 to 36 (WQTY…AFTY), 53 to 73 (IGPY…WMIM), 84 to 104 (LSAM…YFVV), 138 to 158 (IISG…GFVS), 173 to 193 (FGLI…GYLA), 199 to 219 (FFQG…AMMN), 239 to 259 (LFKG…LGYF), 285 to 305 (ISWM…GIAF), 326 to 346 (VLFH…AIMS), 380 to 400 (FVMI…AIAW), 409 to 429 (LVGN…LFAL), 437 to 457 (AGAV…IAWI), and 466 to 486 (IFGL…TYVV).

Belongs to the sodium:solute symporter (SSF) (TC 2.A.21) family.

It is found in the cell membrane. It carries out the reaction L-proline(in) + Na(+)(in) = L-proline(out) + Na(+)(out). Functionally, catalyzes the sodium-dependent uptake of extracellular L-proline. Since most S.aureus strains are L-proline auxotrophs, this transporter may aid the bacterial persistence during an infection of tissues with low proline concentrations. In Staphylococcus aureus, this protein is Sodium/proline symporter.